A 581-amino-acid polypeptide reads, in one-letter code: DEAD-box ATP-dependent RNA helicase 22 (581 aa).

Residues 80–108 carry the Q motif motif; the sequence is VSWKSLGLSDNVSIALRDSGFDRPSLTQA. The region spanning 111–380 is the Helicase ATP-binding domain; it reads IPSILSGKDV…GGILKHMFQD (270 aa). 124 to 131 lines the ATP pocket; sequence AETGSGKT. The DEAD box signature appears at 244–247; the sequence is DEAD. Positions 408 to 566 constitute a Helicase C-terminal domain; the sequence is QVDALIEAVK…GFRNKVKKRA (159 aa).

This sequence belongs to the DEAD box helicase family.

It carries out the reaction ATP + H2O = ADP + phosphate + H(+). This is DEAD-box ATP-dependent RNA helicase 22 (RH22) from Arabidopsis thaliana (Mouse-ear cress).